The sequence spans 102 residues: Small ribosomal subunit protein uS10 (102 aa).

The protein belongs to the universal ribosomal protein uS10 family. In terms of assembly, part of the 30S ribosomal subunit.

Functionally, involved in the binding of tRNA to the ribosomes. The sequence is that of Small ribosomal subunit protein uS10 from Akkermansia muciniphila (strain ATCC BAA-835 / DSM 22959 / JCM 33894 / BCRC 81048 / CCUG 64013 / CIP 107961 / Muc).